The primary structure comprises 622 residues: 1-deoxy-D-xylulose-5-phosphate synthase (622 aa).

Thiamine diphosphate is bound by residues His-80 and 121-123 (GHS). Asp-152 serves as a coordination point for Mg(2+). Residues 153 to 154 (GA), Asn-181, Tyr-288, and Glu-369 each bind thiamine diphosphate. Asn-181 serves as a coordination point for Mg(2+).

Belongs to the transketolase family. DXPS subfamily. As to quaternary structure, homodimer. It depends on Mg(2+) as a cofactor. Thiamine diphosphate is required as a cofactor.

It catalyses the reaction D-glyceraldehyde 3-phosphate + pyruvate + H(+) = 1-deoxy-D-xylulose 5-phosphate + CO2. It functions in the pathway metabolic intermediate biosynthesis; 1-deoxy-D-xylulose 5-phosphate biosynthesis; 1-deoxy-D-xylulose 5-phosphate from D-glyceraldehyde 3-phosphate and pyruvate: step 1/1. Functionally, catalyzes the acyloin condensation reaction between C atoms 2 and 3 of pyruvate and glyceraldehyde 3-phosphate to yield 1-deoxy-D-xylulose-5-phosphate (DXP). This is 1-deoxy-D-xylulose-5-phosphate synthase from Psychromonas ingrahamii (strain DSM 17664 / CCUG 51855 / 37).